The primary structure comprises 304 residues: PHO85 cyclin-9 (304 aa).

A Cyclin N-terminal domain is found at 19–146 (EMIQFLATST…LLEYLNWDVR (128 aa)).

Belongs to the cyclin family. PCL1,2 subfamily. Forms a cyclin-CDK complex with PHO85.

M/G1-specific cyclin partner of the cyclin-dependent kinase (CDK) PHO85. May have a role in bud site selection in G1 phase. This is PHO85 cyclin-9 (PCL9) from Saccharomyces cerevisiae (strain ATCC 204508 / S288c) (Baker's yeast).